A 213-amino-acid polypeptide reads, in one-letter code: Uridine kinase (213 aa).

G15–S22 is an ATP binding site.

The protein belongs to the uridine kinase family.

The protein localises to the cytoplasm. The catalysed reaction is uridine + ATP = UMP + ADP + H(+). It carries out the reaction cytidine + ATP = CMP + ADP + H(+). It participates in pyrimidine metabolism; CTP biosynthesis via salvage pathway; CTP from cytidine: step 1/3. Its pathway is pyrimidine metabolism; UMP biosynthesis via salvage pathway; UMP from uridine: step 1/1. The sequence is that of Uridine kinase from Yersinia pseudotuberculosis serotype O:1b (strain IP 31758).